A 71-amino-acid polypeptide reads, in one-letter code: Sec-independent protein translocase protein TatA (71 aa).

The helical transmembrane segment at 1–21 (MGASPVQLLIVLFIAVLVFGG) threads the bilayer.

Belongs to the TatA/E family. The Tat system comprises two distinct complexes: a TatABC complex, containing multiple copies of TatA, TatB and TatC subunits, and a separate TatA complex, containing only TatA subunits. Substrates initially bind to the TatABC complex, which probably triggers association of the separate TatA complex to form the active translocon.

The protein resides in the cell inner membrane. Its function is as follows. Part of the twin-arginine translocation (Tat) system that transports large folded proteins containing a characteristic twin-arginine motif in their signal peptide across membranes. TatA could form the protein-conducting channel of the Tat system. This Dichelobacter nodosus (strain VCS1703A) protein is Sec-independent protein translocase protein TatA.